Reading from the N-terminus, the 215-residue chain is N-(5'-phosphoribosyl)anthranilate isomerase (215 aa).

The protein belongs to the TrpF family.

The enzyme catalyses N-(5-phospho-beta-D-ribosyl)anthranilate = 1-(2-carboxyphenylamino)-1-deoxy-D-ribulose 5-phosphate. It functions in the pathway amino-acid biosynthesis; L-tryptophan biosynthesis; L-tryptophan from chorismate: step 3/5. The polypeptide is N-(5'-phosphoribosyl)anthranilate isomerase (Chlorobium phaeobacteroides (strain DSM 266 / SMG 266 / 2430)).